The following is a 179-amino-acid chain: Large ribosomal subunit protein uL5 (179 aa).

It belongs to the universal ribosomal protein uL5 family. Part of the 50S ribosomal subunit; part of the 5S rRNA/L5/L18/L25 subcomplex. Contacts the 5S rRNA and the P site tRNA. Forms a bridge to the 30S subunit in the 70S ribosome.

In terms of biological role, this is one of the proteins that bind and probably mediate the attachment of the 5S RNA into the large ribosomal subunit, where it forms part of the central protuberance. In the 70S ribosome it contacts protein S13 of the 30S subunit (bridge B1b), connecting the 2 subunits; this bridge is implicated in subunit movement. Contacts the P site tRNA; the 5S rRNA and some of its associated proteins might help stabilize positioning of ribosome-bound tRNAs. The polypeptide is Large ribosomal subunit protein uL5 (Chromohalobacter salexigens (strain ATCC BAA-138 / DSM 3043 / CIP 106854 / NCIMB 13768 / 1H11)).